An 88-amino-acid polypeptide reads, in one-letter code: Eclosion hormone (88 aa).

Positions Met1 to Cys26 are cleaved as a signal peptide. 3 disulfide bridges follow: Cys40–Cys64, Cys44–Cys60, and Cys47–Cys75.

The protein belongs to the insect eclosion hormone family.

The protein localises to the secreted. Neuropeptide that triggers the performance of ecdysis behaviors at the end of a molt. It triggers adult behavior patterns: larval, pupal and adult ecdysis, and plasticization during the molt. The chain is Eclosion hormone from Manduca sexta (Tobacco hawkmoth).